A 190-amino-acid polypeptide reads, in one-letter code: Protein GrpE (190 aa).

Residues 1–10 show a composition bias toward basic and acidic residues; sequence MKKHVTEEQK. The interval 1–42 is disordered; it reads MKKHVTEEQKTSAAPEAEQASPESSAAEAATPEERISRLEEQ. The segment covering 12–30 has biased composition (low complexity); sequence SAAPEAEQASPESSAAEAA. The segment covering 32 to 42 has biased composition (basic and acidic residues); the sequence is PEERISRLEEQ.

It belongs to the GrpE family. In terms of assembly, homodimer.

It is found in the cytoplasm. Participates actively in the response to hyperosmotic and heat shock by preventing the aggregation of stress-denatured proteins, in association with DnaK and GrpE. It is the nucleotide exchange factor for DnaK and may function as a thermosensor. Unfolded proteins bind initially to DnaJ; upon interaction with the DnaJ-bound protein, DnaK hydrolyzes its bound ATP, resulting in the formation of a stable complex. GrpE releases ADP from DnaK; ATP binding to DnaK triggers the release of the substrate protein, thus completing the reaction cycle. Several rounds of ATP-dependent interactions between DnaJ, DnaK and GrpE are required for fully efficient folding. This Pelobacter propionicus (strain DSM 2379 / NBRC 103807 / OttBd1) protein is Protein GrpE.